Reading from the N-terminus, the 417-residue chain is Transcobalamin-1 (417 aa).

The first 25 residues, 1–25 (MRQSHQLPLVGLLLFSLIPSQLCQS), serve as a signal peptide directing secretion. The segment at 24–308 (QSCVVSEKDY…DVTKLLLVPK (285 aa)) is globular N-terminal alpha domain. An N-linked (GlcNAc...) asparagine glycan is attached at asparagine 90. 143 to 147 (TNYYQ) provides a ligand contact to cyanocob(III)alamin. A disulfide bridge connects residues cysteine 156 and cysteine 198. 3 N-linked (GlcNAc...) asparagine glycosylation sites follow: asparagine 161, asparagine 166, and asparagine 179. Aspartate 187 and glutamine 287 together coordinate cyanocob(III)alamin. Positions 309-327 (VQVNITDEPVPVVPTLSPE) are flexible linker. 4 N-linked (GlcNAc...) asparagine glycosylation sites follow: asparagine 312, asparagine 328, asparagine 345, and asparagine 360. Residues 328–417 (NISVIYCVKI…GIMLSKMESI (90 aa)) are globular C-terminal beta domain. Residues 376 to 377 (YI) and 393 to 395 (WEH) each bind cyanocob(III)alamin.

It belongs to the eukaryotic cobalamin transport proteins family. In terms of processing, contains about 30% carbohydrates. Haptocorrins are a family of cobalamin-binding glycoproteins found in blood, salivary and mucosal secretions.

The protein localises to the secreted. Functionally, binds vitamin B12 with femtomolar affinity and protects it from the acidic environment of the stomach. Binds to cobalamin and to cobalamin analogs such as cobinamide. The polypeptide is Transcobalamin-1 (TCN1) (Sus scrofa (Pig)).